The following is an 831-amino-acid chain: MSMARRDFIKQTAAAAAATVAGVPLTGYTQNIVTESEAAKLKWSKAPCRFCGTGCGVNVAVKDNQVVATHGDFNAEVNKGLNCVKGYFLSKIMYGSDRLTQPLLRIKDGKYAKDGEFAPVSWDQAFDVMAEQFKRVLKDKGPEAVGMFGSGQWTVWEGYAALKLMKAGFRTNNLDPNARHCMASAAVGFMRTFGADEPMGCYDDIENADAFVLWGSNMAEMHPILWTRVTDRRLSAPATKVAVLSTFEHRSYELADLTLTFEPQSDLAILNYIANHIIRTKRVNRDFVDKHTVFREGNADIGYGLRPEHPLQQAARNAGDAGGSKPITFDDFARFVSKYDLEYTAKLSGVPKNRLEELAELYADPKVRVTSFWTMGFNQHTRGVWCNNMVYNIHLLTGKISTPGNSPFSLTGQPSACGTAREVGTFSHRLPADLVVTNPEHRRHAEEIWKLPDGTIPSKVGAHAVLQNRMLKDGKINAYWVMVNNNMQAAANLMNEGLPGYRNPENFIVVSDAYPTVTTLSADLILPAAMWVEKEGAYGNAERRTQFWHQLVDAPGQARSDLWQLVEFSKRFKVEEVWPADLLAKKPEYRGKTLYDVLFANGKVNQFPNTELDPEYANQEAQAFGFYLQKGLFEEYAEFGRGHGHDLAPFDVYHKARGLRWPVVDGKETLWRYREGSDPYVKPGTGFQFYGNPDGKAVIFALPYEPPPEAPDKEYPFWLSTGRVLEHWHSGSMTRRVPELYKAFPEAVCFMHPDDAQALGVRRGVEVEVVSRRGKMRTRVETRGRDKPPRGLVFVPWFDAGQLINKVTLDATDPISFQTDFKKCAVKIVKV.

Residues 1-38 constitute a signal peptide (tat-type signal); the sequence is MSMARRDFIKQTAAAAAATVAGVPLTGYTQNIVTESEA. A 4Fe-4S Mo/W bis-MGD-type domain is found at 41–97; sequence LKWSKAPCRFCGTGCGVNVAVKDNQVVATHGDFNAEVNKGLNCVKGYFLSKIMYGSD. [4Fe-4S] cluster-binding residues include Cys-48, Cys-51, Cys-55, and Cys-83. Residues Lys-85, Gln-152, Asn-177, Cys-181, 214 to 221, 245 to 249, 264 to 266, Met-375, Gln-379, Asn-485, 511 to 512, Lys-534, Asp-561, and 721 to 730 contribute to the Mo-bis(molybdopterin guanine dinucleotide) site; these read WGSNMAEM, STFEH, QSD, SD, and TGRVLEHWHS. A substrate-binding site is contributed by Trp-797. Asn-805 and Lys-822 together coordinate Mo-bis(molybdopterin guanine dinucleotide).

This sequence belongs to the prokaryotic molybdopterin-containing oxidoreductase family. NasA/NapA/NarB subfamily. Component of the periplasmic nitrate reductase NapAB complex composed of NapA and NapB. [4Fe-4S] cluster serves as cofactor. Mo-bis(molybdopterin guanine dinucleotide) is required as a cofactor. Post-translationally, predicted to be exported by the Tat system. The position of the signal peptide cleavage has not been experimentally proven.

It localises to the periplasm. The enzyme catalyses 2 Fe(II)-[cytochrome] + nitrate + 2 H(+) = 2 Fe(III)-[cytochrome] + nitrite + H2O. Functionally, catalytic subunit of the periplasmic nitrate reductase complex NapAB. Receives electrons from NapB and catalyzes the reduction of nitrate to nitrite. In Bordetella parapertussis (strain 12822 / ATCC BAA-587 / NCTC 13253), this protein is Periplasmic nitrate reductase.